A 43-amino-acid chain; its full sequence is Protein PsbN (43 aa).

The chain crosses the membrane as a helical span at residues 7–27 (LSISIGVMVVAITGFSIYTAF).

It belongs to the PsbN family.

The protein resides in the cellular thylakoid membrane. In terms of biological role, may play a role in photosystem I and II biogenesis. This Trichodesmium erythraeum (strain IMS101) protein is Protein PsbN.